The chain runs to 164 residues: Transcriptional repressor NrdR (164 aa).

The segment at 3–34 (CPFCSAQDTKVIDSRLVADGVQIRRRRECLSC) is a zinc-finger region. Positions 49–139 (PRLVKTDGTR…VYRSFQDISE (91 aa)) constitute an ATP-cone domain.

Belongs to the NrdR family. Zn(2+) serves as cofactor.

Its function is as follows. Negatively regulates transcription of bacterial ribonucleotide reductase nrd genes and operons by binding to NrdR-boxes. This Alcanivorax borkumensis (strain ATCC 700651 / DSM 11573 / NCIMB 13689 / SK2) protein is Transcriptional repressor NrdR.